Here is a 120-residue protein sequence, read N- to C-terminus: Large ribosomal subunit protein uL24 (120 aa).

Positions 1–33 (MTRQPHKQRNRQERAALHEKQKQVRAPLSPELR) are disordered. Residues 10–22 (NRQERAALHEKQK) show a composition bias toward basic and acidic residues.

Belongs to the universal ribosomal protein uL24 family. Part of the 50S ribosomal subunit.

In terms of biological role, one of two assembly initiator proteins, it binds directly to the 5'-end of the 23S rRNA, where it nucleates assembly of the 50S subunit. Functionally, located at the polypeptide exit tunnel on the outside of the subunit. The chain is Large ribosomal subunit protein uL24 from Natronomonas pharaonis (strain ATCC 35678 / DSM 2160 / CIP 103997 / JCM 8858 / NBRC 14720 / NCIMB 2260 / Gabara) (Halobacterium pharaonis).